A 240-amino-acid polypeptide reads, in one-letter code: tRNA (guanine-N(1)-)-methyltransferase (240 aa).

S-adenosyl-L-methionine is bound by residues Gly-108 and 127 to 132 (IGDYVL).

The protein belongs to the RNA methyltransferase TrmD family. As to quaternary structure, homodimer.

The protein localises to the cytoplasm. The enzyme catalyses guanosine(37) in tRNA + S-adenosyl-L-methionine = N(1)-methylguanosine(37) in tRNA + S-adenosyl-L-homocysteine + H(+). Its function is as follows. Specifically methylates guanosine-37 in various tRNAs. The protein is tRNA (guanine-N(1)-)-methyltransferase of Lactobacillus johnsonii (strain CNCM I-12250 / La1 / NCC 533).